Reading from the N-terminus, the 61-residue chain is Large ribosomal subunit protein eL24 (61 aa).

Zn(2+)-binding residues include Cys-7, Cys-10, Cys-33, and Cys-37. The C4-type zinc finger occupies 7–37 (CSFCGGDIPPATGMMHVRNDGTILWFCSNKC).

Belongs to the eukaryotic ribosomal protein eL24 family. In terms of assembly, part of the 50S ribosomal subunit. Forms a cluster with proteins L3 and L14. It depends on Zn(2+) as a cofactor.

Functionally, binds to the 23S rRNA. This Metallosphaera sedula (strain ATCC 51363 / DSM 5348 / JCM 9185 / NBRC 15509 / TH2) protein is Large ribosomal subunit protein eL24.